Here is a 335-residue protein sequence, read N- to C-terminus: Nucleoid-associated protein Ent638_2782 (335 aa).

Belongs to the YejK family.

The protein resides in the cytoplasm. The protein localises to the nucleoid. The chain is Nucleoid-associated protein Ent638_2782 from Enterobacter sp. (strain 638).